A 130-amino-acid chain; its full sequence is Small ribosomal subunit protein uS11c (130 aa).

It belongs to the universal ribosomal protein uS11 family. In terms of assembly, part of the 30S ribosomal subunit.

Its subcellular location is the plastid. It is found in the chloroplast. The sequence is that of Small ribosomal subunit protein uS11c from Psilotum nudum (Whisk fern).